The chain runs to 596 residues: Elongation factor 4 (596 aa).

The tr-type G domain occupies 2 to 184 (KHIRNFSIIA…VIVEQIPPPE (183 aa)). GTP is bound by residues 14-19 (DHGKST) and 131-134 (NKID).

It belongs to the TRAFAC class translation factor GTPase superfamily. Classic translation factor GTPase family. LepA subfamily.

It localises to the cell inner membrane. The catalysed reaction is GTP + H2O = GDP + phosphate + H(+). Functionally, required for accurate and efficient protein synthesis under certain stress conditions. May act as a fidelity factor of the translation reaction, by catalyzing a one-codon backward translocation of tRNAs on improperly translocated ribosomes. Back-translocation proceeds from a post-translocation (POST) complex to a pre-translocation (PRE) complex, thus giving elongation factor G a second chance to translocate the tRNAs correctly. Binds to ribosomes in a GTP-dependent manner. The sequence is that of Elongation factor 4 from Shewanella pealeana (strain ATCC 700345 / ANG-SQ1).